Consider the following 70-residue polypeptide: Large ribosomal subunit protein bL31 (70 aa).

Zn(2+)-binding residues include C16, C18, C37, and C40.

It belongs to the bacterial ribosomal protein bL31 family. Type A subfamily. Part of the 50S ribosomal subunit. Zn(2+) serves as cofactor.

Binds the 23S rRNA. This is Large ribosomal subunit protein bL31 from Shewanella woodyi (strain ATCC 51908 / MS32).